The chain runs to 206 residues: Two-component response regulator ARR15 (206 aa).

One can recognise a Response regulatory domain in the interval 19–146 (HVLAVDDSFV…DVKRLKELIM (128 aa)). Asp79 is modified (4-aspartylphosphate). The tract at residues 151–206 (AEEGKTKKLSPKRILQNDIDSSPSSSSTSSSSSSHDVSSLDDDTPSSKRIKLESRG) is disordered. The span at 168–187 (DIDSSPSSSSTSSSSSSHDV) shows a compositional bias: low complexity.

The protein belongs to the ARR family. Type-A subfamily. In terms of processing, two-component system major event consists of a His-to-Asp phosphorelay between a sensor histidine kinase (HK) and a response regulator (RR). In plants, the His-to-Asp phosphorelay involves an additional intermediate named Histidine-containing phosphotransfer protein (HPt). This multistep phosphorelay consists of a His-Asp-His-Asp sequential transfer of a phosphate group between first a His and an Asp of the HK protein, followed by the transfer to a conserved His of the HPt protein and finally the transfer to an Asp in the receiver domain of the RR protein.

The protein localises to the nucleus. Its function is as follows. Functions as a response regulator involved in His-to-Asp phosphorelay signal transduction system. Phosphorylation of the Asp residue in the receiver domain activates the ability of the protein to promote the transcription of target genes. Type-A response regulators seem to act as negative regulators of the cytokinin signaling. In Arabidopsis thaliana (Mouse-ear cress), this protein is Two-component response regulator ARR15 (ARR15).